Consider the following 427-residue polypeptide: Glutamate-1-semialdehyde 2,1-aminomutase (427 aa).

The residue at position 265 (Lys-265) is an N6-(pyridoxal phosphate)lysine.

The protein belongs to the class-III pyridoxal-phosphate-dependent aminotransferase family. HemL subfamily. As to quaternary structure, homodimer. The cofactor is pyridoxal 5'-phosphate.

The protein localises to the cytoplasm. The catalysed reaction is (S)-4-amino-5-oxopentanoate = 5-aminolevulinate. It functions in the pathway porphyrin-containing compound metabolism; protoporphyrin-IX biosynthesis; 5-aminolevulinate from L-glutamyl-tRNA(Glu): step 2/2. This chain is Glutamate-1-semialdehyde 2,1-aminomutase, found in Pseudomonas putida (strain W619).